A 534-amino-acid chain; its full sequence is EH domain-containing protein 1 (534 aa).

M1 is modified (N-acetylmethionine). In terms of domain architecture, Dynamin-type G spans 55–286; sequence FDNKPMVLLV…DLFKDIQSLP (232 aa). The interval 65-72 is G1 motif; that stretch reads GQYSTGKT. 65–72 is an ATP binding site; it reads GQYSTGKT. The interval 91–92 is G2 motif; the sequence is EP. Residues 153-156 are G3 motif; sequence DTPG. The stretch at 198 to 227 forms a coiled coil; that stretch reads DEFSEVIKALKNHEDKIRVVLNKADQIETQ. The interval 219–222 is G4 motif; the sequence is NKAD. ATP is bound at residue K220. A region of interest (G5 motif) is located at residue I243. Position 258 (W258) interacts with ATP. A phosphoserine mark is found at S355 and S456. The EH domain occupies 444–532; the sequence is DKPTYDEIFY…PHLIPPSKRR (89 aa). In terms of domain architecture, EF-hand spans 476 to 511; it reads LPNTVLGKIWKLADVDKDGLLDDEEFALANHLIKVK. Positions 489, 491, 493, and 500 each coordinate Ca(2+).

Belongs to the TRAFAC class dynamin-like GTPase superfamily. Dynamin/Fzo/YdjA family. EHD subfamily. As to quaternary structure, homooligomer, and heterooligomer with EHD2, EHD3 and EHD4, ATP-binding is required for heterooligomerization. Interacts (via EH domain) with MICALL1 (via NPF1 motif); the interaction is direct and recruits EHD1 to membranes. Interacts with RAB35; the interaction is indirect through MICALL1 and recruits EHD1 to membranes. Interacts (via EH domain) with PACSIN2 (via NPF motifs); regulates localization to tubular recycling endosome membranes. Interacts with PACSIN1. Interacts with RAB8A. Interacts with FER1L5 (via second C2 domain). Interacts with MYOF. Interacts with ZFYVE20. Interacts (via EH domain) with RAB11FIP2.

It is found in the recycling endosome membrane. Its subcellular location is the early endosome membrane. The protein localises to the cell membrane. It localises to the cell projection. The protein resides in the cilium membrane. Its function is as follows. ATP- and membrane-binding protein that controls membrane reorganization/tubulation upon ATP hydrolysis. In vitro causes vesiculation of endocytic membranes. Acts in early endocytic membrane fusion and membrane trafficking of recycling endosomes. Recruited to endosomal membranes upon nerve growth factor stimulation, indirectly regulates neurite outgrowth. Plays a role in myoblast fusion. Involved in the unidirectional retrograde dendritic transport of endocytosed BACE1 and in efficient sorting of BACE1 to axons implicating a function in neuronal APP processing. Plays a role in the formation of the ciliary vesicle (CV), an early step in cilium biogenesis. Proposed to be required for the fusion of distal appendage vesicles (DAVs) to form the CV by recruiting SNARE complex component SNAP29. Is required for recruitment of transition zone proteins CEP290, RPGRIP1L, TMEM67 and B9D2, and of IFT20 following DAV reorganization before Rab8-dependent ciliary membrane extension. Required for the loss of CCP110 form the mother centriole essential for the maturation of the basal body during ciliogenesis. This is EH domain-containing protein 1 from Rattus norvegicus (Rat).